The sequence spans 359 residues: CMP-N-acetylneuraminate-poly-alpha-2,8-sialyltransferase (359 aa).

Over 1-7 the chain is Cytoplasmic; that stretch reads MRSIRKR. The chain crosses the membrane as a helical; Signal-anchor for type II membrane protein span at residues 8–20; sequence WTICTISLLLIFY. The Lumenal segment spans residues 21-359; sequence KTKEIARTEE…KLTTGKCMKQ (339 aa). 3 N-linked (GlcNAc...) asparagine glycosylation sites follow: Asn-50, Asn-74, and Asn-119. Intrachain disulfides connect Cys-142-Cys-292 and Cys-156-Cys-356. CMP-N-acetyl-beta-neuraminate is bound by residues Asn-147 and Asn-170. N-linked (GlcNAc...) asparagine glycosylation is found at Asn-204 and Asn-219. CMP-N-acetyl-beta-neuraminate-binding residues include Ser-279, Thr-280, Gly-281, and Trp-301. The active-site Proton donor/acceptor is the His-331.

It belongs to the glycosyltransferase 29 family. Post-translationally, autopolysialylated.

It localises to the golgi apparatus membrane. It is found in the secreted. The catalysed reaction is [N-acetyl-alpha-D-neuraminosyl-(2-&gt;8)](n) + CMP-N-acetyl-beta-neuraminate = [N-acetyl-alpha-D-neuraminosyl-(2-&gt;8)](n+1) + CMP + H(+). The protein operates within protein modification; protein glycosylation. Catalyzes the transfer of a sialic acid from a CMP-linked sialic acid donor onto a terminal alpha-2,3-, alpha-2,6-, or alpha-2,8-linked sialic acid of an N-linked glycan protein acceptor through alpha-2,8-linkages. Therefore, participates in polysialic acid synthesis on various sialylated N-acetyllactosaminyl oligosaccharides, including NCAM1 N-glycans, FETUB N-glycans and AHSG. It is noteworthy that alpha-2,3-linked sialic acid is apparently a better acceptor than alpha-2,6-linked sialic acid. In Cricetulus griseus (Chinese hamster), this protein is CMP-N-acetylneuraminate-poly-alpha-2,8-sialyltransferase.